The primary structure comprises 448 residues: DNA repair protein RadA (448 aa).

Residues 10 to 27 (CSNCGNTSPKWSGQCFDC) form a C4-type zinc finger. Position 91–98 (91–98 (GDPGIGKS)) interacts with ATP. Residues 250–254 (KNRFG) carry the RadA KNRFG motif motif. The interval 349-448 (EVYLSIAGGL…KDLKLLLGSS (100 aa)) is lon-protease-like.

It belongs to the RecA family. RadA subfamily.

Its function is as follows. DNA-dependent ATPase involved in processing of recombination intermediates, plays a role in repairing DNA breaks. Stimulates the branch migration of RecA-mediated strand transfer reactions, allowing the 3' invading strand to extend heteroduplex DNA faster. Binds ssDNA in the presence of ADP but not other nucleotides, has ATPase activity that is stimulated by ssDNA and various branched DNA structures, but inhibited by SSB. Does not have RecA's homology-searching function. The sequence is that of DNA repair protein RadA from Rickettsia bellii (strain RML369-C).